Reading from the N-terminus, the 634-residue chain is Kelch-like protein 31 (634 aa).

Ala-2 is subject to N,N,N-trimethylalanine. The 65-residue stretch at 73–137 folds into the BTB domain; it reads CDLVIGTKTK…AYTGKLTLSL (65 aa). The region spanning 172–273 is the BACK domain; sequence CMYVVNIAET…SAQDLVNYVQ (102 aa). Kelch repeat units follow at residues 317-365, 366-419, 420-466, 468-513, 515-565, and 567-614; these read VLVT…VMDG, FLYV…VFNG, LVYA…VADG, VLVT…TLSD, VYVM…ALHG, and AYLV…TLSM.

N-terminus is methylated by METTL11A/NTM1. Strongly expressed in skeletal muscle and weakly in heart. According to PubMed:15302408, not expressed in other tissues. According to PubMed:18719355, abundantly expressed in both embryonic skeletal and heart tissues.

Functionally, transcriptional repressor in MAPK/JNK signaling pathway to regulate cellular functions. Overexpression inhibits the transcriptional activities of both the TPA-response element (TRE) and serum response element (SRE). This Homo sapiens (Human) protein is Kelch-like protein 31 (KLHL31).